A 75-amino-acid polypeptide reads, in one-letter code: Large ribosomal subunit protein bL31 (75 aa).

C16, C18, C37, and C40 together coordinate Zn(2+).

This sequence belongs to the bacterial ribosomal protein bL31 family. Type A subfamily. Part of the 50S ribosomal subunit. The cofactor is Zn(2+).

Binds the 23S rRNA. This is Large ribosomal subunit protein bL31 from Baumannia cicadellinicola subsp. Homalodisca coagulata.